A 393-amino-acid polypeptide reads, in one-letter code: Na(+)/H(+) antiporter NhaA 2 (393 aa).

11 consecutive transmembrane segments (helical) span residues 18–38 (SGGL…NSQL), 53–73 (LSVQ…MVGL), 91–111 (ILPG…YLAF), 120–140 (GWAI…SLLG), 149–169 (VFLA…IGLF), 172–192 (TGVS…LVAL), 208–228 (LVLW…GVLL), 263–283 (FIIV…GLGM), 294–314 (VAAG…LLLV), 332–352 (GTTL…LLAF), and 363–383 (IGIL…LRFS).

It belongs to the NhaA Na(+)/H(+) (TC 2.A.33) antiporter family.

It is found in the cell inner membrane. The enzyme catalyses Na(+)(in) + 2 H(+)(out) = Na(+)(out) + 2 H(+)(in). In terms of biological role, na(+)/H(+) antiporter that extrudes sodium in exchange for external protons. The polypeptide is Na(+)/H(+) antiporter NhaA 2 (Brucella anthropi (strain ATCC 49188 / DSM 6882 / CCUG 24695 / JCM 21032 / LMG 3331 / NBRC 15819 / NCTC 12168 / Alc 37) (Ochrobactrum anthropi)).